The primary structure comprises 52 residues: Light-harvesting protein B-880 alpha chain (52 aa).

Over methionine 1–arginine 12 the chain is Cytoplasmic. The chain crosses the membrane as a helical span at residues threonine 13 to leucine 33. Histidine 29 contributes to the a bacteriochlorophyll binding site. Over serine 34–serine 52 the chain is Periplasmic.

Belongs to the antenna complex alpha subunit family. In terms of assembly, the core complex is formed by different alpha and beta chains, binding bacteriochlorophyll molecules, and arranged most probably in tetrameric structures disposed around the reaction center. The non-pigmented gamma chains may constitute additional components.

The protein localises to the cell inner membrane. Its function is as follows. Antenna complexes are light-harvesting systems, which transfer the excitation energy to the reaction centers. The polypeptide is Light-harvesting protein B-880 alpha chain (Afifella marina (Rhodobium marinum)).